Reading from the N-terminus, the 291-residue chain is 4-hydroxy-tetrahydrodipicolinate synthase (291 aa).

Thr-47 serves as a coordination point for pyruvate. The active-site Proton donor/acceptor is Tyr-134. The Schiff-base intermediate with substrate role is filled by Lys-162. Ile-205 contacts pyruvate.

The protein belongs to the DapA family. Homotetramer; dimer of dimers.

The protein localises to the cytoplasm. The catalysed reaction is L-aspartate 4-semialdehyde + pyruvate = (2S,4S)-4-hydroxy-2,3,4,5-tetrahydrodipicolinate + H2O + H(+). It functions in the pathway amino-acid biosynthesis; L-lysine biosynthesis via DAP pathway; (S)-tetrahydrodipicolinate from L-aspartate: step 3/4. Its function is as follows. Catalyzes the condensation of (S)-aspartate-beta-semialdehyde [(S)-ASA] and pyruvate to 4-hydroxy-tetrahydrodipicolinate (HTPA). In Methanospirillum hungatei JF-1 (strain ATCC 27890 / DSM 864 / NBRC 100397 / JF-1), this protein is 4-hydroxy-tetrahydrodipicolinate synthase.